The chain runs to 167 residues: Small heat shock protein C1 (167 aa).

The sHSP domain maps to 59 to 167 (SLYESNSIKS…EQEAREIVID (109 aa)).

The protein belongs to the small heat shock protein (HSP20) family.

This Rickettsia conorii (strain ATCC VR-613 / Malish 7) protein is Small heat shock protein C1 (hspC1).